Consider the following 198-residue polypeptide: Beta-crystallin A1 (198 aa).

An N-terminal arm region spans residues 1 to 13 (MAQINPLPVPLGP). 2 consecutive Beta/gamma crystallin 'Greek key' domains span residues 14-53 (WKIT…KVEC) and 54-100 (GGWI…RPIC). Residues 101-106 (SANHKE) form a connecting peptide region. Beta/gamma crystallin 'Greek key' domains follow at residues 107–148 (SKLV…KVQC) and 149–197 (GSWV…RRIQ).

The protein belongs to the beta/gamma-crystallin family. As to quaternary structure, homo/heterodimer, or complexes of higher-order. The structure of beta-crystallin oligomers seems to be stabilized through interactions between the N-terminal arms.

Functionally, crystallins are the dominant structural components of the vertebrate eye lens. This chain is Beta-crystallin A1, found in Rana temporaria (European common frog).